Here is a 132-residue protein sequence, read N- to C-terminus: D-ribose pyranase (132 aa).

The active-site Proton donor is the His20. Substrate is bound by residues Asp28, His99, and 121–123; that span reads YAN.

It belongs to the RbsD / FucU family. RbsD subfamily. In terms of assembly, homodecamer.

Its subcellular location is the cytoplasm. The catalysed reaction is beta-D-ribopyranose = beta-D-ribofuranose. Its pathway is carbohydrate metabolism; D-ribose degradation; D-ribose 5-phosphate from beta-D-ribopyranose: step 1/2. Its function is as follows. Catalyzes the interconversion of beta-pyran and beta-furan forms of D-ribose. The sequence is that of D-ribose pyranase from Variovorax paradoxus (strain S110).